The primary structure comprises 193 residues: Selenoprotein S A (193 aa).

A helical transmembrane segment spans residues 29–49; it reads WALASYGWYILFGCIILYFLI. Residues 114–125 are compositionally biased toward basic and acidic residues; sequence IETWDRMQEGKS. The disordered stretch occupies residues 114–193; the sequence is IETWDRMQEG…RRGPSSGGUG (80 aa). Low complexity predominate over residues 137–153; the sequence is SPSTSASSSPSTSSSAP. Residue Sec-192 is a non-standard amino acid, selenocysteine.

It belongs to the selenoprotein S family.

It localises to the endoplasmic reticulum membrane. It is found in the cytoplasm. Involved in the degradation process of misfolded endoplasmic reticulum (ER) luminal proteins. Participates in the transfer of misfolded proteins from the ER to the cytosol, where they are destroyed by the proteasome in a ubiquitin-dependent manner. This chain is Selenoprotein S A (vimp-a), found in Xenopus laevis (African clawed frog).